A 515-amino-acid chain; its full sequence is Tyrosine decarboxylase 1 (515 aa).

2 tandem repeats follow at residues 81–138 and 141–192. The tract at residues 81–192 is 2 X approximate tandem repeats; sequence DDITNHIVPG…KVLNKIGKDQ (112 aa). Residue Ala105 participates in substrate binding. Residues Thr169 and Cys170 each contribute to the pyridoxal 5'-phosphate site. His205 provides a ligand contact to substrate. Pyridoxal 5'-phosphate contacts are provided by Thr264 and Asn318. Lys321 bears the N6-(pyridoxal phosphate)lysine mark.

This sequence belongs to the group II decarboxylase family. Pyridoxal 5'-phosphate serves as cofactor. Mostly expressed in bulbs, and, to a lower extent, in stems, roots, leaves and flowers.

It catalyses the reaction L-tyrosine + H(+) = tyramine + CO2. The protein operates within alkaloid biosynthesis. In terms of biological role, catalyzes the decarboxylation of L-tyrosine to tyramine, which is converted to norbelladine, a precursor to all Amaryllidaceae alkaloids such as galanthamine, lycorine and haemanthamine, and including haemanthamine- and crinamine-type alkaloids, promising anticancer agents. This is Tyrosine decarboxylase 1 from Narcissus pseudonarcissus (Daffodil).